Reading from the N-terminus, the 461-residue chain is MSQKNFFDEGKSYGVNDYAGFHFENGADSSLPQVSAQGVVRETDSSNFDASPVASGSGISDVGPFGADFHQLQQHVQTPYGGMTMPASSSSGATSVPPEQDPSLSVSFNRLPKSASTKTKNGRIRSSRREDDNRIPFYDLDVAEGAEDDLQEDFHVEGMKTKSGRKIQRPVAYNPNATALKRKSRKVDMVTLCSVCQRGHSPLSNRIVFCDGCNSPYHQLCHHPPIDDATVQDVDAEWFCMKCQYRRAKQPLETGMTAQDLGLSESDKKMYLSSLPTPHLADLILFCEKSYPSLPIYNPRTRELLGEIRHQLLVSSERQQISLQERLHAKQDEAPSDEPAPVPYTASYVANSGTLYDYPTLIRLAIRNTLSPSKDEIFNWLAQNVPLLPTFHDSASEAIRWMVNKGQLVRSGSIYQIATVEEYPHLQPSLLPTFQRNRKVPKLVPVSFPTDDPQNLCATVL.

The segment at 79–130 (PYGGMTMPASSSSGATSVPPEQDPSLSVSFNRLPKSASTKTKNGRIRSSRRE) is disordered. A compositionally biased stretch (polar residues) spans 102-119 (PSLSVSFNRLPKSASTKT). The PHD-type zinc finger occupies 190 to 246 (VTLCSVCQRGHSPLSNRIVFCDGCNSPYHQLCHHPPIDDATVQDVDAEWFCMKCQYR).

In terms of assembly, component of the SWM histone demethylase complex composed of at least lsd1, lsd2, phf1 and phf2.

The protein resides in the nucleus. In terms of biological role, component of the SWM histone demethylase complex that specifically demethylates H3K9me2, a specific tag for epigenetic transcriptional activation, thereby acting as a corepressor. Has a role in regulating heterochromatin propagation and euchromatic transcription. This Schizosaccharomyces pombe (strain 972 / ATCC 24843) (Fission yeast) protein is SWM histone demethylase complex subunit phf1 (phf1).